The following is a 396-amino-acid chain: Elongation factor Tu (396 aa).

The tr-type G domain occupies 10 to 206; it reads KPHVNIGTIG…AVDESVPEPV (197 aa). A G1 region spans residues 19-26; it reads GHVDHGKT. Residue 19–26 coordinates GTP; sequence GHVDHGKT. A Mg(2+)-binding site is contributed by Thr26. Residues 62-66 form a G2 region; sequence GITIN. Positions 83 to 86 are G3; that stretch reads DAPG. GTP contacts are provided by residues 83–87 and 138–141; these read DAPGH and NKSD. The G4 stretch occupies residues 138–141; the sequence is NKSD. A G5 region spans residues 176–178; it reads SGL.

This sequence belongs to the TRAFAC class translation factor GTPase superfamily. Classic translation factor GTPase family. EF-Tu/EF-1A subfamily. In terms of assembly, monomer.

It localises to the cytoplasm. It catalyses the reaction GTP + H2O = GDP + phosphate + H(+). Its function is as follows. GTP hydrolase that promotes the GTP-dependent binding of aminoacyl-tRNA to the A-site of ribosomes during protein biosynthesis. The polypeptide is Elongation factor Tu (Beutenbergia cavernae (strain ATCC BAA-8 / DSM 12333 / CCUG 43141 / JCM 11478 / NBRC 16432 / NCIMB 13614 / HKI 0122)).